The following is a 137-amino-acid chain: uncharacterized protein (137 aa).

This is an uncharacterized protein from Rickettsia prowazekii (strain Madrid E).